The sequence spans 250 residues: tRNA (guanine-N(1)-)-methyltransferase (250 aa).

S-adenosyl-L-methionine contacts are provided by residues G112 and 132 to 137; that span reads IGDFVL.

This sequence belongs to the RNA methyltransferase TrmD family. Homodimer.

The protein localises to the cytoplasm. The enzyme catalyses guanosine(37) in tRNA + S-adenosyl-L-methionine = N(1)-methylguanosine(37) in tRNA + S-adenosyl-L-homocysteine + H(+). Specifically methylates guanosine-37 in various tRNAs. This Marinomonas sp. (strain MWYL1) protein is tRNA (guanine-N(1)-)-methyltransferase.